A 297-amino-acid chain; its full sequence is Probable endonuclease 4 (297 aa).

Residues histidine 69, histidine 110, glutamate 145, aspartate 179, histidine 182, histidine 214, aspartate 227, histidine 229, and glutamate 259 each coordinate Zn(2+).

The protein belongs to the AP endonuclease 2 family. Zn(2+) serves as cofactor.

The enzyme catalyses Endonucleolytic cleavage to 5'-phosphooligonucleotide end-products.. Its function is as follows. Endonuclease IV plays a role in DNA repair. It cleaves phosphodiester bonds at apurinic or apyrimidinic (AP) sites, generating a 3'-hydroxyl group and a 5'-terminal sugar phosphate. The chain is Probable endonuclease 4 from Listeria welshimeri serovar 6b (strain ATCC 35897 / DSM 20650 / CCUG 15529 / CIP 8149 / NCTC 11857 / SLCC 5334 / V8).